The chain runs to 463 residues: MELRAWVLLWRLVLLQSSAVLLSSGPSGPATSDRSVVSESTVSWAAGARAVLRCQSPRMVWTQDRLHDRQRVVHWDLSGSKAGGPARRLVDMYSTGEQRVGEQRLGEQRVGEQRVYEPRDRGRLLLPPSAFHDGNFSLFIRAVEETDEGLYTCNLHHHYCHLYESLAVSLEVTDDPRAAGAHWDGEKEVLAVERGAPALLTCVNRAHVWTDRHLEEAQQVVHWDRQPPGVPHDRADRLLDLYASGERRAYGPPFLRDRVAVEADAFARGDFSLLIDPVEPADEGTYSCHLHHHYCGLHERRVFHLRVTEPAARPPPPPRDSPGNGSSHSGAPGPGARDPTLTRGRSVINVIVPEGRAHFFQQLGYVLATLLLFILLLITVVLATRQRRRGGYEYSNKKSKSKGKDINMAEFAVASGDQSLYRSEDIRLDYKNNILKERAEVAHSLPPAKNIDLDKEFRKEYCK.

A signal peptide spans M1–A19. The Extracellular portion of the chain corresponds to V20–Q362. Ig-like V-type domains are found at residues P29 to T173 and P176 to T308. Intrachain disulfides connect C54-C153 and C202-C288. A glycan (N-linked (GlcNAc...) asparagine) is linked at N135. S244 is subject to Phosphoserine. An RGD motif is present at residues R268–D270. Residues E309–L341 are disordered. Residues S321–G335 show a composition bias toward low complexity. An N-linked (GlcNAc...) asparagine glycan is attached at N324. Residues L363 to A383 traverse the membrane as a helical segment. The Cytoplasmic portion of the chain corresponds to T384 to K463.

As to quaternary structure, homodimer in cis. Does not appear to form trans-homodimers. Interacts with ITGB3; the interaction inhibits ITGAV:ITGB3 heterodimer formation.

The protein localises to the cell membrane. It is found in the cell junction. The protein resides in the tight junction. Its subcellular location is the cytoplasm. It localises to the cell projection. The protein localises to the cilium membrane. It is found in the nucleus. Functionally, transmembrane protein which can modulate activity of various signaling pathways, probably via binding to integrin ITGAV:ITGB3. Mediates heterophilic cell-cell interactions in vitro. Inhibits osteoclastogenesis downstream of TNFSF11/RANKL and CSF1, where it may function by attenuating signaling via integrin ITGB3 and MAP kinase p38. Plays a role in cartilage formation where it promotes proliferation and maturation of growth plate chondrocytes. Stimulates formation of primary cilia in chondrocytes. Enhances expression of genes involved in the hedgehog signaling pathway in chondrocytes, including the hedgehog signaling molecule IHH; may also promote signaling via the PTHLH/PTHrP pathway. Plays a role in angiogenesis where it suppresses migration of endothelial cells and also promotes their apoptosis. Inhibits VEGF-induced activation of AKT and p38 MAP kinase in endothelial cells. Also inhibits VTN (vitronectin)-mediated integrin ITGAV:ITGB3 signaling and activation of PTK2/FAK. May play a role in the maturation and maintenance of the blood-brain barrier. This is Matrix remodeling-associated protein 8 (MXRA8) from Bos taurus (Bovine).